The following is a 341-amino-acid chain: Tetraacyldisaccharide 4'-kinase (341 aa).

An ATP-binding site is contributed by 54-61 (TVGGAGKT).

Belongs to the LpxK family.

The enzyme catalyses a lipid A disaccharide + ATP = a lipid IVA + ADP + H(+). It participates in glycolipid biosynthesis; lipid IV(A) biosynthesis; lipid IV(A) from (3R)-3-hydroxytetradecanoyl-[acyl-carrier-protein] and UDP-N-acetyl-alpha-D-glucosamine: step 6/6. In terms of biological role, transfers the gamma-phosphate of ATP to the 4'-position of a tetraacyldisaccharide 1-phosphate intermediate (termed DS-1-P) to form tetraacyldisaccharide 1,4'-bis-phosphate (lipid IVA). The protein is Tetraacyldisaccharide 4'-kinase of Brucella melitensis biotype 2 (strain ATCC 23457).